Consider the following 41-residue polypeptide: Large ribosomal subunit protein bL36 (41 aa).

This sequence belongs to the bacterial ribosomal protein bL36 family.

The sequence is that of Large ribosomal subunit protein bL36 from Rhodopseudomonas palustris (strain TIE-1).